We begin with the raw amino-acid sequence, 517 residues long: Bifunctional purine biosynthesis protein PurH (517 aa).

Positions 1–145 constitute an MGS-like domain; the sequence is MSPLALVSVS…KNHKDVSVLV (145 aa).

This sequence belongs to the PurH family.

The enzyme catalyses (6R)-10-formyltetrahydrofolate + 5-amino-1-(5-phospho-beta-D-ribosyl)imidazole-4-carboxamide = 5-formamido-1-(5-phospho-D-ribosyl)imidazole-4-carboxamide + (6S)-5,6,7,8-tetrahydrofolate. The catalysed reaction is IMP + H2O = 5-formamido-1-(5-phospho-D-ribosyl)imidazole-4-carboxamide. Its pathway is purine metabolism; IMP biosynthesis via de novo pathway; 5-formamido-1-(5-phospho-D-ribosyl)imidazole-4-carboxamide from 5-amino-1-(5-phospho-D-ribosyl)imidazole-4-carboxamide (10-formyl THF route): step 1/1. The protein operates within purine metabolism; IMP biosynthesis via de novo pathway; IMP from 5-formamido-1-(5-phospho-D-ribosyl)imidazole-4-carboxamide: step 1/1. The chain is Bifunctional purine biosynthesis protein PurH from Prochlorococcus marinus (strain AS9601).